The chain runs to 413 residues: Multifunctional CCA protein (413 aa).

Positions 8 and 11 each coordinate ATP. Positions 8 and 11 each coordinate CTP. Residues Asp-21 and Asp-23 each coordinate Mg(2+). ATP-binding residues include Arg-91, Arg-137, and Arg-140. The CTP site is built by Arg-91, Arg-137, and Arg-140. In terms of domain architecture, HD spans 228 to 329; it reads TGIHTLMVLA…IKIFDKADLW (102 aa).

It belongs to the tRNA nucleotidyltransferase/poly(A) polymerase family. Bacterial CCA-adding enzyme type 1 subfamily. In terms of assembly, monomer. Can also form homodimers and oligomers. Mg(2+) serves as cofactor. It depends on Ni(2+) as a cofactor.

The enzyme catalyses a tRNA precursor + 2 CTP + ATP = a tRNA with a 3' CCA end + 3 diphosphate. It carries out the reaction a tRNA with a 3' CCA end + 2 CTP + ATP = a tRNA with a 3' CCACCA end + 3 diphosphate. In terms of biological role, catalyzes the addition and repair of the essential 3'-terminal CCA sequence in tRNAs without using a nucleic acid template. Adds these three nucleotides in the order of C, C, and A to the tRNA nucleotide-73, using CTP and ATP as substrates and producing inorganic pyrophosphate. tRNA 3'-terminal CCA addition is required both for tRNA processing and repair. Also involved in tRNA surveillance by mediating tandem CCA addition to generate a CCACCA at the 3' terminus of unstable tRNAs. While stable tRNAs receive only 3'-terminal CCA, unstable tRNAs are marked with CCACCA and rapidly degraded. The polypeptide is Multifunctional CCA protein (Shewanella woodyi (strain ATCC 51908 / MS32)).